Reading from the N-terminus, the 211-residue chain is Mediator of RNA polymerase II transcription subunit 20 (211 aa).

The protein belongs to the Mediator complex subunit 20 family. Component of the Mediator complex.

It localises to the nucleus. Its function is as follows. Component of the Mediator complex, a coactivator involved in the regulated transcription of nearly all RNA polymerase II-dependent genes. Mediator functions as a bridge to convey information from gene-specific regulatory proteins to the basal RNA polymerase II transcription machinery. Mediator is recruited to promoters by direct interactions with regulatory proteins and serves as a scaffold for the assembly of a functional preinitiation complex with RNA polymerase II and the general transcription factors. This chain is Mediator of RNA polymerase II transcription subunit 20 (med20), found in Xenopus laevis (African clawed frog).